We begin with the raw amino-acid sequence, 203 residues long: Type III effector protein HopBF1 (203 aa).

A disordered region spans residues M1 to P23. ATP is bound by residues S40, Q41, K42, D107, I109, and D114. The active site involves D155. An ATP-binding site is contributed by Q157.

This sequence belongs to the HopBF1 family.

It is found in the secreted. Its subcellular location is the host cell. The catalysed reaction is L-seryl-[protein] + ATP = O-phospho-L-seryl-[protein] + ADP + H(+). In terms of biological role, effector protein that targets and inactivates the eukaryotic molecular chaperone HSP90 during infection. HopBF1 is recognized by HSP90 as a host client. As a result, HopBF1 phosphorylates HSP90, leading to the inactivation of the HSP90 ATPase activity and chaperone function. In vitro, can phosphorylate the recombinant yeast HSP82 (HSP90) and human HSP 90-beta on Ser-108. In Ewingella americana (strain ATCC 33852 / DSM 4580 / CCUG 14506 / JCM 5911 / LMG 7869 / NCTC 12157 / CDC 1468-78), this protein is Type III effector protein HopBF1.